A 39-amino-acid chain; its full sequence is NEDANVIKSYSDVGVDQFKYGLELDNSIKADQEGHLEGD.

The region spanning 15-39 (VDQFKYGLELDNSIKADQEGHLEGD) is the Chitin-binding type R&amp;R domain.

In terms of biological role, component of the cuticle of the larva of flesh fly. The sequence is that of Larval cuticle protein SC6 from Sarcophaga bullata (Grey flesh fly).